Here is a 92-residue protein sequence, read N- to C-terminus: uncharacterized protein (92 aa).

The first 29 residues, 1–29 (MAAQTDYKKQVVGILLSLAFVLFVFSFSE), serve as a signal peptide directing secretion.

This is an uncharacterized protein from Bacillus subtilis (strain 168).